The primary structure comprises 881 residues: Disks large homolog 2 (881 aa).

2 disordered regions span residues 16-41 and 63-88; these read HRQQ…MNPA and LSTT…SFPR. PDZ domains lie at 155 to 242, 250 to 337, and 424 to 505; these read EITL…RRRR, EIKL…GKPT, and KIVL…QYRP. Residues 539–609 enclose the SH3 domain; sequence KRSLYVRALF…PSKRRVERKE (71 aa). A Guanylate kinase-like domain is found at 683–866; it reads ARPVIILGPM…IYNQCKMVIE (184 aa). The disordered stretch occupies residues 709-729; the sequence is GSCVPPANSSDQEDTTRPKRD.

The protein belongs to the MAGUK family.

It is found in the cell membrane. Its subcellular location is the postsynaptic density. The protein resides in the synapse. It localises to the membrane. The protein localises to the cell projection. It is found in the axon. Its subcellular location is the perikaryon. In terms of biological role, may play a role in synapse assembly and function. This chain is Disks large homolog 2 (dlg2), found in Danio rerio (Zebrafish).